Here is a 483-residue protein sequence, read N- to C-terminus: Glycogen synthase (483 aa).

Lys18 serves as a coordination point for ADP-alpha-D-glucose.

Belongs to the glycosyltransferase 1 family. Bacterial/plant glycogen synthase subfamily.

It catalyses the reaction [(1-&gt;4)-alpha-D-glucosyl](n) + ADP-alpha-D-glucose = [(1-&gt;4)-alpha-D-glucosyl](n+1) + ADP + H(+). The protein operates within glycan biosynthesis; glycogen biosynthesis. Synthesizes alpha-1,4-glucan chains using ADP-glucose. In Rhodopseudomonas palustris (strain TIE-1), this protein is Glycogen synthase.